A 149-amino-acid chain; its full sequence is Large ribosomal subunit protein bL9 (149 aa).

Position 89 is an N6-acetyllysine (lysine 89).

It belongs to the bacterial ribosomal protein bL9 family.

Functionally, binds to the 23S rRNA. In Shigella dysenteriae serotype 1 (strain Sd197), this protein is Large ribosomal subunit protein bL9.